The following is a 432-amino-acid chain: Trigger factor (432 aa).

A PPIase FKBP-type domain is found at 161 to 246; sequence EDRVTIDFTG…LKKVEERGLP (86 aa).

This sequence belongs to the FKBP-type PPIase family. Tig subfamily.

The protein resides in the cytoplasm. It carries out the reaction [protein]-peptidylproline (omega=180) = [protein]-peptidylproline (omega=0). Involved in protein export. Acts as a chaperone by maintaining the newly synthesized protein in an open conformation. Functions as a peptidyl-prolyl cis-trans isomerase. In Salmonella choleraesuis (strain SC-B67), this protein is Trigger factor.